The chain runs to 68 residues: MKTQFAIFLITLVLFQMFSQSDAIFKAIWSGIKSLFGKRGLSDLDDLDESFDGEVSQADIDFLKELMQ.

The N-terminal stretch at 1-23 (MKTQFAIFLITLVLFQMFSQSDA) is a signal peptide. Phe36 carries the phenylalanine amide modification. A propeptide spanning residues 40-68 (GLSDLDDLDESFDGEVSQADIDFLKELMQ) is cleaved from the precursor.

It belongs to the non-disulfide-bridged peptide (NDBP) superfamily. Short antimicrobial peptide (group 4) family. As to expression, expressed by the venom gland.

The protein resides in the secreted. Its subcellular location is the target cell membrane. Its function is as follows. Amphipathic peptide which inhibits the growth of Gram-positive bacteria. The protein is Peptide Hp1090 of Heterometrus petersii (Asian forest scorpion).